The following is a 176-amino-acid chain: Transcription factor E (176 aa).

Residues 8 to 90 form the HTH TFE/IIEalpha-type domain; sequence EDPVIQKYLH…LWTFQYEKIP (83 aa).

It belongs to the TFE family. As to quaternary structure, monomer. Interaction with RNA polymerase subunits RpoF and RpoE is necessary for Tfe stimulatory transcription activity. Able to interact with Tbp and RNA polymerase in the absence of DNA promoter. Interacts both with the preinitiation and elongation complexes.

In terms of biological role, transcription factor that plays a role in the activation of archaeal genes transcribed by RNA polymerase. Facilitates transcription initiation by enhancing TATA-box recognition by TATA-box-binding protein (Tbp), and transcription factor B (Tfb) and RNA polymerase recruitment. Not absolutely required for transcription in vitro, but particularly important in cases where Tbp or Tfb function is not optimal. It dynamically alters the nucleic acid-binding properties of RNA polymerases by stabilizing the initiation complex and destabilizing elongation complexes. Seems to translocate with the RNA polymerase following initiation and acts by binding to the non template strand of the transcription bubble in elongation complexes. This Haloarcula marismortui (strain ATCC 43049 / DSM 3752 / JCM 8966 / VKM B-1809) (Halobacterium marismortui) protein is Transcription factor E.